The following is a 368-amino-acid chain: Phosphoserine aminotransferase (368 aa).

Arg44 is a binding site for L-glutamate. Residues 78–79 (AT), Trp104, Thr157, Asp179, and Gln202 contribute to the pyridoxal 5'-phosphate site. Residue Lys203 is modified to N6-(pyridoxal phosphate)lysine. 244 to 245 (NT) contacts pyridoxal 5'-phosphate.

The protein belongs to the class-V pyridoxal-phosphate-dependent aminotransferase family. SerC subfamily. As to quaternary structure, homodimer. It depends on pyridoxal 5'-phosphate as a cofactor.

The protein resides in the cytoplasm. The catalysed reaction is O-phospho-L-serine + 2-oxoglutarate = 3-phosphooxypyruvate + L-glutamate. It carries out the reaction 4-(phosphooxy)-L-threonine + 2-oxoglutarate = (R)-3-hydroxy-2-oxo-4-phosphooxybutanoate + L-glutamate. The protein operates within amino-acid biosynthesis; L-serine biosynthesis; L-serine from 3-phospho-D-glycerate: step 2/3. It participates in cofactor biosynthesis; pyridoxine 5'-phosphate biosynthesis; pyridoxine 5'-phosphate from D-erythrose 4-phosphate: step 3/5. Catalyzes the reversible conversion of 3-phosphohydroxypyruvate to phosphoserine and of 3-hydroxy-2-oxo-4-phosphonooxybutanoate to phosphohydroxythreonine. The protein is Phosphoserine aminotransferase of Neisseria meningitidis serogroup A / serotype 4A (strain DSM 15465 / Z2491).